The following is a 262-amino-acid chain: MLLYIFFLMYTTRSRDMSTLQSNMFKFYNAPHSGMYPTFWVGHLKTMIKICVKRSDVINFNKPLDKEMLEMMYGSLLGDASAEKRKGGKGTRMLFYQEGSHNEYLLFLHRLIANLGYCNTNIPKLQTRISNNGKIRKIIKFSTWTYDQFNEMHKNWYINGKKVLPNDIDQFLSPLALAIWIMDDGGKMGKGLKLATNNFTLNEVKQLMAMLDVKYNIKSTMHKTGAMDQYNMYMLSDSMPILVKKIKPYIVPSMKYKLGNYM.

Belongs to the LAGLIDADG endonuclease family.

The protein resides in the mitochondrion. This protein is responsible for splicing and maturation of cytochrome b mRNA. Specifically, it may be responsible for the splicing specificity of the second intron. The polypeptide is Cytochrome b mRNA maturase bI2 (bI2) (Debaryomyces hansenii (strain ATCC 36239 / CBS 767 / BCRC 21394 / JCM 1990 / NBRC 0083 / IGC 2968) (Yeast)).